Consider the following 163-residue polypeptide: Cuticle protein 38 (163 aa).

Repeat copies occupy residues 7–10 (AAPV), 13–16 (AAPA), 20–23 (AAPA), 26–29 (AAPV), 56–59 (AAPA), 62–65 (AAPA), 68–71 (AAPA), 75–78 (AAPA), 81–84 (AAPA), 93–96 (AAPV), 123–126 (AAPA), 135–138 (AAPA), 141–144 (AAPA), and 156–159 (AAPV).

Component of the cuticle of migratory locust which contains more than 100 different structural proteins. The polypeptide is Cuticle protein 38 (Locusta migratoria (Migratory locust)).